A 1018-amino-acid polypeptide reads, in one-letter code: Serine/threonine-protein phosphatase BSL2 (1018 aa).

A disordered region spans residues 1-75 (MDEDSSMVAD…AAAVVGQEQQ (75 aa)). Residues 41-57 (SPPPEGGSVPTPPPSDP) show a composition bias toward pro residues. A compositionally biased stretch (low complexity) spans 63-75 (QQQAAAVVGQEQQ). 5 Kelch repeats span residues 149 to 195 (TSAG…VATA), 253 to 301 (YLMA…TASA), 306 to 356 (LLLL…VFVN), 362 to 409 (SGGA…DAAG), and 430 to 479 (LIFI…RLPG). A disordered region spans residues 569–590 (DRDCGAEATPSGKPTFSLIKPD). At Ser627 the chain carries Phosphoserine. Residues Asp720, His722, Asp754, and Asn786 each contribute to the Mn(2+) site. The active-site Proton donor is His787. Mn(2+)-binding residues include His839 and His918. Ser975 is modified (phosphoserine). Over residues 994 to 1011 (ANRPATPTRGRPQNSNDR) the composition is skewed to polar residues. Residues 994–1018 (ANRPATPTRGRPQNSNDRGGSLAWM) form a disordered region.

Belongs to the PPP phosphatase family. BSU subfamily. Interacts with BSK8. It depends on Mn(2+) as a cofactor. In terms of tissue distribution, expressed throughout the plant, with a higher level in younger parts.

It localises to the cytoplasm. Its subcellular location is the cell membrane. The protein localises to the nucleus. It carries out the reaction O-phospho-L-seryl-[protein] + H2O = L-seryl-[protein] + phosphate. The catalysed reaction is O-phospho-L-threonyl-[protein] + H2O = L-threonyl-[protein] + phosphate. Phosphatase involved in elongation process, probably by acting as a regulator of brassinolide signaling. This is Serine/threonine-protein phosphatase BSL2 (BSL2) from Arabidopsis thaliana (Mouse-ear cress).